The primary structure comprises 346 residues: Biotin synthase (346 aa).

Residues 38–256 (RQVQVSTLLS…IAVARIMMPT (219 aa)) form the Radical SAM core domain. [4Fe-4S] cluster is bound by residues cysteine 53, cysteine 57, and cysteine 60. [2Fe-2S] cluster is bound by residues cysteine 97, cysteine 128, cysteine 188, and arginine 260.

The protein belongs to the radical SAM superfamily. Biotin synthase family. In terms of assembly, homodimer. [4Fe-4S] cluster is required as a cofactor. Requires [2Fe-2S] cluster as cofactor.

The catalysed reaction is (4R,5S)-dethiobiotin + (sulfur carrier)-SH + 2 reduced [2Fe-2S]-[ferredoxin] + 2 S-adenosyl-L-methionine = (sulfur carrier)-H + biotin + 2 5'-deoxyadenosine + 2 L-methionine + 2 oxidized [2Fe-2S]-[ferredoxin]. It functions in the pathway cofactor biosynthesis; biotin biosynthesis; biotin from 7,8-diaminononanoate: step 2/2. Its function is as follows. Catalyzes the conversion of dethiobiotin (DTB) to biotin by the insertion of a sulfur atom into dethiobiotin via a radical-based mechanism. The protein is Biotin synthase of Escherichia coli O6:K15:H31 (strain 536 / UPEC).